The primary structure comprises 618 residues: Grainyhead-like protein 1 homolog (618 aa).

A transcription activation region spans residues 1 to 91; it reads MTQEYDNKRP…EGEHPEPEHS (91 aa). Positions 76–92 are enriched in basic and acidic residues; that stretch reads SSAVKPEGEHPEPEHSK. The interval 76–100 is disordered; that stretch reads SSAVKPEGEHPEPEHSKRNSIPNVT. A Phosphothreonine modification is found at Thr-208. Residues 248-474 enclose the Grh/CP2 DB domain; that stretch reads SGNNFEYTLE…DLDTQPVLFI (227 aa). Interaction with DNA stretches follow at residues 380 to 389 and 427 to 430; these read TDFSSQKGVK and RKIR.

This sequence belongs to the grh/CP2 family. Grainyhead subfamily. As to quaternary structure, binds DNA as homodimer. Homodimer, also forms heterodimers with GRHL2 or GRHL3. Methylation at Arg-9 and Lys-116 may be involved in regulating transcriptional activation. In terms of tissue distribution, isoform 1 is highly expressed in brain, pancreas, tonsil, placenta and kidney. Isoform 2 is highly expressed in brain and liver. Expression in the skin is confined to the suprabasal layers of the epidermis and to the hair follicles.

The protein resides in the nucleus. Functionally, transcription factor involved in epithelial development. Binds directly to the consensus DNA sequence 5'-AACCGGTT-3'. Important regulator of DSG1 in the context of hair anchorage and epidermal differentiation, participates in the maintenance of the skin barrier. There is no genetic interaction with GRHL3, nor functional cooperativity due to diverse target gene selectivity during epithelia development. May play a role in regulating glucose homeostasis and insulin signaling. The polypeptide is Grainyhead-like protein 1 homolog (Mus musculus (Mouse)).